A 592-amino-acid chain; its full sequence is Putative RING finger protein ORF9 (592 aa).

The segment at 12–49 (CCICLEEDIERVDTIPCQHTVCRPCYLKPMINKCPVCR) adopts an RING-type zinc-finger fold. A coiled-coil region spans residues 414-441 (WELIKREELLQRRYKREEQNLKYTSNRL).

In Ostreid herpesvirus 1 (isolate France) (OsHV-1), this protein is Putative RING finger protein ORF9.